Here is a 148-residue protein sequence, read N- to C-terminus: Flagellar assembly factor FliW (148 aa).

It belongs to the FliW family. As to quaternary structure, interacts with translational regulator CsrA and flagellin(s).

It localises to the cytoplasm. Functionally, acts as an anti-CsrA protein, binds CsrA and prevents it from repressing translation of its target genes, one of which is flagellin. Binds to flagellin and participates in the assembly of the flagellum. In Ruminiclostridium cellulolyticum (strain ATCC 35319 / DSM 5812 / JCM 6584 / H10) (Clostridium cellulolyticum), this protein is Flagellar assembly factor FliW.